The primary structure comprises 253 residues: Triosephosphate isomerase (253 aa).

8–10 (NWK) lines the substrate pocket. The Electrophile role is filled by H93. E165 (proton acceptor) is an active-site residue. Substrate-binding positions include G171, S210, and 231-232 (GG).

The protein belongs to the triosephosphate isomerase family. Homodimer.

It is found in the cytoplasm. It catalyses the reaction D-glyceraldehyde 3-phosphate = dihydroxyacetone phosphate. Its pathway is carbohydrate biosynthesis; gluconeogenesis. The protein operates within carbohydrate degradation; glycolysis; D-glyceraldehyde 3-phosphate from glycerone phosphate: step 1/1. Its function is as follows. Involved in the gluconeogenesis. Catalyzes stereospecifically the conversion of dihydroxyacetone phosphate (DHAP) to D-glyceraldehyde-3-phosphate (G3P). The sequence is that of Triosephosphate isomerase from Francisella tularensis subsp. mediasiatica (strain FSC147).